We begin with the raw amino-acid sequence, 213 residues long: Glycerol-3-phosphate acyltransferase (213 aa).

6 helical membrane-spanning segments follow: residues 3-23 (IIILLLIASYLLGAIPFGLWI), 48-68 (ILGVKAGIAVFIFDLLKGTLA), 71-91 (LPLIFHINGVSPLIFGLLAVI), 119-139 (PFFLLYLLVIFILVLWLFSMI), 144-164 (VVAAIFALLGILIFPSFGFIL), and 165-185 (TSYDLLFSIIIFALAIIIIFR).

It belongs to the PlsY family. As to quaternary structure, probably interacts with PlsX.

The protein resides in the cell membrane. The enzyme catalyses an acyl phosphate + sn-glycerol 3-phosphate = a 1-acyl-sn-glycero-3-phosphate + phosphate. Its pathway is lipid metabolism; phospholipid metabolism. Catalyzes the transfer of an acyl group from acyl-phosphate (acyl-PO(4)) to glycerol-3-phosphate (G3P) to form lysophosphatidic acid (LPA). This enzyme utilizes acyl-phosphate as fatty acyl donor, but not acyl-CoA or acyl-ACP. The protein is Glycerol-3-phosphate acyltransferase of Lactococcus lactis subsp. cremoris (strain MG1363).